Reading from the N-terminus, the 162-residue chain is MKVRGKAIVYGDKIDTDVIIPAKYLVYTDPAVLGQHAMEPLDPEFPKKAKGAVLVAGRAFGMGSSREQAAIALKGAGVLAVVAESFARIFFRNAINVGLPVLQVPDVTKRVREGDELEVDIEGGYLLNLTTGERLEGKPLRGLPLAILKAGGLVNFLKTAGR.

Belongs to the LeuD family. LeuD type 2 subfamily. Heterodimer of LeuC and LeuD.

The enzyme catalyses (2R,3S)-3-isopropylmalate = (2S)-2-isopropylmalate. The protein operates within amino-acid biosynthesis; L-leucine biosynthesis; L-leucine from 3-methyl-2-oxobutanoate: step 2/4. Its function is as follows. Catalyzes the isomerization between 2-isopropylmalate and 3-isopropylmalate, via the formation of 2-isopropylmaleate. This chain is 3-isopropylmalate dehydratase small subunit, found in Pyrobaculum neutrophilum (strain DSM 2338 / JCM 9278 / NBRC 100436 / V24Sta) (Thermoproteus neutrophilus).